Consider the following 236-residue polypeptide: Small ribosomal subunit protein uS2c (236 aa).

Belongs to the universal ribosomal protein uS2 family.

Its subcellular location is the plastid. The protein localises to the chloroplast. The protein is Small ribosomal subunit protein uS2c (rps2) of Amborella trichopoda.